A 274-amino-acid polypeptide reads, in one-letter code: Acyl-[acyl-carrier-protein]--UDP-N-acetylglucosamine O-acyltransferase (274 aa).

It belongs to the transferase hexapeptide repeat family. LpxA subfamily. In terms of assembly, homotrimer.

The protein resides in the cytoplasm. It carries out the reaction a (3R)-hydroxyacyl-[ACP] + UDP-N-acetyl-alpha-D-glucosamine = a UDP-3-O-[(3R)-3-hydroxyacyl]-N-acetyl-alpha-D-glucosamine + holo-[ACP]. The protein operates within glycolipid biosynthesis; lipid IV(A) biosynthesis; lipid IV(A) from (3R)-3-hydroxytetradecanoyl-[acyl-carrier-protein] and UDP-N-acetyl-alpha-D-glucosamine: step 1/6. Its function is as follows. Involved in the biosynthesis of lipid A, a phosphorylated glycolipid that anchors the lipopolysaccharide to the outer membrane of the cell. The chain is Acyl-[acyl-carrier-protein]--UDP-N-acetylglucosamine O-acyltransferase from Bartonella henselae (strain ATCC 49882 / DSM 28221 / CCUG 30454 / Houston 1) (Rochalimaea henselae).